The chain runs to 353 residues: Photosystem II protein D1 (353 aa).

Position 2 is an N-acetylthreonine (Thr-2). Thr-2 is modified (phosphothreonine). A run of 3 helical transmembrane segments spans residues 29–46 (YIGWFGVLMIPTLLTATS), 118–133 (HFLLGVACYMGREWEL), and 142–156 (WIAVAYSAPVAAATA). His-118 serves as a coordination point for chlorophyll a. Position 126 (Tyr-126) interacts with pheophytin a. Positions 170 and 189 each coordinate [CaMn4O5] cluster. The chain crosses the membrane as a helical span at residues 197 to 218 (FHMLGVAGVFGGSLFSAMHGSL). Residue His-198 coordinates chlorophyll a. A quinone-binding positions include His-215 and 264–265 (SF). His-215 contributes to the Fe cation binding site. A Fe cation-binding site is contributed by His-272. The helical transmembrane segment at 274-288 (FLAAWPVVGIWFTAL) threads the bilayer. [CaMn4O5] cluster is bound by residues His-332, Glu-333, Asp-342, and Ala-344. Residues 345–353 (AVEANSIDG) constitute a propeptide that is removed on maturation.

The protein belongs to the reaction center PufL/M/PsbA/D family. In terms of assembly, PSII is composed of 1 copy each of membrane proteins PsbA, PsbB, PsbC, PsbD, PsbE, PsbF, PsbH, PsbI, PsbJ, PsbK, PsbL, PsbM, PsbT, PsbX, PsbY, PsbZ, Psb30/Ycf12, at least 3 peripheral proteins of the oxygen-evolving complex and a large number of cofactors. It forms dimeric complexes. It depends on The D1/D2 heterodimer binds P680, chlorophylls that are the primary electron donor of PSII, and subsequent electron acceptors. It shares a non-heme iron and each subunit binds pheophytin, quinone, additional chlorophylls, carotenoids and lipids. D1 provides most of the ligands for the Mn4-Ca-O5 cluster of the oxygen-evolving complex (OEC). There is also a Cl(-1) ion associated with D1 and D2, which is required for oxygen evolution. The PSII complex binds additional chlorophylls, carotenoids and specific lipids. as a cofactor. Post-translationally, tyr-161 forms a radical intermediate that is referred to as redox-active TyrZ, YZ or Y-Z. In terms of processing, C-terminally processed by CTPA; processing is essential to allow assembly of the oxygen-evolving complex and thus photosynthetic growth.

The protein localises to the plastid. The protein resides in the chloroplast thylakoid membrane. It catalyses the reaction 2 a plastoquinone + 4 hnu + 2 H2O = 2 a plastoquinol + O2. Photosystem II (PSII) is a light-driven water:plastoquinone oxidoreductase that uses light energy to abstract electrons from H(2)O, generating O(2) and a proton gradient subsequently used for ATP formation. It consists of a core antenna complex that captures photons, and an electron transfer chain that converts photonic excitation into a charge separation. The D1/D2 (PsbA/PsbD) reaction center heterodimer binds P680, the primary electron donor of PSII as well as several subsequent electron acceptors. This chain is Photosystem II protein D1, found in Cryptomeria japonica (Japanese cedar).